Reading from the N-terminus, the 611-residue chain is Urease subunit alpha 2 (611 aa).

Residues 154 to 611 form the Urease domain; that stretch reads GGIDSHIHFI…LPMAQRYFLF (458 aa). Ni(2+) is bound by residues His-159, His-161, and Lys-242. Residue Lys-242 is modified to N6-carboxylysine. His-244 contributes to the substrate binding site. Residues His-271 and His-297 each coordinate Ni(2+). His-345 (proton donor) is an active-site residue. Asp-385 provides a ligand contact to Ni(2+). Positions 411–434 are disordered; sequence GHLAPDQSAKTEQSLDNIMLSPTD. The span at 418–434 shows a compositional bias: polar residues; sequence SAKTEQSLDNIMLSPTD.

The protein belongs to the metallo-dependent hydrolases superfamily. Urease alpha subunit family. As to quaternary structure, heterotrimer of UreA (gamma), UreB (beta) and UreC (alpha) subunits. Three heterotrimers associate to form the active enzyme. The cofactor is Ni cation. Post-translationally, carboxylation allows a single lysine to coordinate two nickel ions.

It is found in the cytoplasm. It carries out the reaction urea + 2 H2O + H(+) = hydrogencarbonate + 2 NH4(+). The protein operates within nitrogen metabolism; urea degradation; CO(2) and NH(3) from urea (urease route): step 1/1. This chain is Urease subunit alpha 2, found in Psychrobacter cryohalolentis (strain ATCC BAA-1226 / DSM 17306 / VKM B-2378 / K5).